The following is a 156-amino-acid chain: MTITDLVLILFIAALLAYALYDQFIMPRRNGPTLLSIALLRRGRVDSVIFVGLVAILIYNNVTSHGAQMTTWLLSALALMGFYIFWIRTPRIIFKQRGFFFANVWIEYNRIKEMNLSEDGVLVMQLEQRRLLIRVRNIDDLEKIYKLLIENQYLKI.

Topologically, residues 1–5 are periplasmic; sequence MTITD. Residues 6–26 form a helical membrane-spanning segment; the sequence is LVLILFIAALLAYALYDQFIM. Residues 27–44 are Cytoplasmic-facing; it reads PRRNGPTLLSIALLRRGR. A helical transmembrane segment spans residues 45–65; that stretch reads VDSVIFVGLVAILIYNNVTSH. Residue Gly66 is a topological domain, periplasmic. A helical membrane pass occupies residues 67-87; the sequence is AQMTTWLLSALALMGFYIFWI. Topologically, residues 88-156 are cytoplasmic; the sequence is RTPRIIFKQR…LLIENQYLKI (69 aa).

The protein belongs to the UPF0266 family.

It is found in the cell inner membrane. The chain is UPF0266 membrane protein YobD (yobD) from Salmonella typhimurium (strain LT2 / SGSC1412 / ATCC 700720).